Consider the following 344-residue polypeptide: E3 ubiquitin-protein ligase RING2-A (344 aa).

The tract at residues 2-181 is interaction with HIP2; the sequence is ATPVNAQCSS…EDNCDSRSHV (180 aa). The RING-type zinc-finger motif lies at 48–88; that stretch reads CPICLDMLKNTMTTKECLHRFCSDCIVTALRSGNKECPTCR. The interaction with nucleosomes via an acidic patch on histone H2A and histone H2B stretch occupies residues 90–95; it reads KLVSKR. Positions 148–230 are disordered; sequence QAMHRAQRVR…DPPGGGETGS (83 aa). The segment covering 180 to 192 has biased composition (polar residues); that stretch reads HVSNPSVHSNQEA.

As to quaternary structure, component of chromatin-associated Polycomb (PcG) complexes. Component of a PRC1-like complex. Component of some MLL1/MLL complex.

Its subcellular location is the nucleus. It localises to the cytoplasm. It is found in the chromosome. It catalyses the reaction S-ubiquitinyl-[E2 ubiquitin-conjugating enzyme]-L-cysteine + [acceptor protein]-L-lysine = [E2 ubiquitin-conjugating enzyme]-L-cysteine + N(6)-ubiquitinyl-[acceptor protein]-L-lysine.. The protein operates within protein modification; protein ubiquitination. Functionally, E3 ubiquitin-protein ligase that mediates monoubiquitination of 'Lys-119' of histone H2A (H2AK119Ub), thereby playing a central role in histone code and gene regulation. H2AK119Ub gives a specific tag for epigenetic transcriptional repression. Essential component of a Polycomb group (PcG) multiprotein PRC1-like complex, a complex class required to maintain the transcriptionally repressive state of many genes, including Hox genes, throughout development. PcG PRC1 complex acts via chromatin remodeling and modification of histones, rendering chromatin heritably changed in its expressibility. In Xenopus laevis (African clawed frog), this protein is E3 ubiquitin-protein ligase RING2-A (rnf2-a).